The chain runs to 394 residues: Protein maelstrom (394 aa).

The segment at residues 2 to 69 (APKKQNGFMM…ARRDKRGSLN (68 aa)) is a DNA-binding region (HMG box). The segment at 44–93 (TQQRGPYNSDAKDANAARRDKRGSLNGHGQVDKAQREAAESLMDKAQREA) is disordered. The span at 73–93 (QVDKAQREAAESLMDKAQREA) shows a compositional bias: basic and acidic residues.

This sequence belongs to the maelstrom family.

It is found in the cytoplasm. It localises to the nucleus. Involved both in the piRNA and miRNA metabolic processes. As a component of the meiotic nuage, plays a central role during oogenesis by repressing transposable elements and preventing their mobilization, which is essential for the germline integrity. Repression of transposable elements is mediated via the piRNA metabolic process, which mediates the repression of transposable elements during meiosis by forming complexes composed of piRNAs and Piwi proteins and governs the repression of transposons. As a nuclear component, it is required for proper differentiation in the germline stem cell (GSC) lineage by repressing microRNA-7 (miR-7), thereby acting as an indirect regulator of bag-of-marbles (Bam). Acts by binding to the promoter of miR-7 gene and repressing its expression; miR-7 repression alleviates the Bam repression by miR-7, thereby allowing differentiation in the germline stem cell (GSC) lineage. In Drosophila sechellia (Fruit fly), this protein is Protein maelstrom (mael).